The primary structure comprises 277 residues: Glycerol-3-phosphate acyltransferase (277 aa).

5 consecutive transmembrane segments (helical) span residues 3 to 23 (FFIFLILVGYLMGSINSAIIV), 55 to 75 (IMVMVFDALKGILPVILAKLL), 79 to 99 (PVTVAFTALAAVVGHMYPVFF), 111 to 131 (IGALLAFHFVIGVMVAATWLL), and 155 to 175 (LILVGNLNIFPPLFMITILVL). Residues 231–277 (KTEQAEAVKKPKAKKATTKAKKTTSKEETAKKPKSTKPKTKTVKEKE) are disordered. Composition is skewed to basic residues over residues 240–253 (KPKAKKATTKAKKT) and 262–271 (KPKSTKPKTK).

It belongs to the PlsY family. Probably interacts with PlsX.

The protein localises to the cell inner membrane. It carries out the reaction an acyl phosphate + sn-glycerol 3-phosphate = a 1-acyl-sn-glycero-3-phosphate + phosphate. It participates in lipid metabolism; phospholipid metabolism. Functionally, catalyzes the transfer of an acyl group from acyl-phosphate (acyl-PO(4)) to glycerol-3-phosphate (G3P) to form lysophosphatidic acid (LPA). This enzyme utilizes acyl-phosphate as fatty acyl donor, but not acyl-CoA or acyl-ACP. The protein is Glycerol-3-phosphate acyltransferase of Legionella pneumophila (strain Lens).